The sequence spans 131 residues: uncharacterized protein (131 aa).

A signal peptide spans 1–16 (MDVLFVAIFAVPLILG).

The protein resides in the secreted. This is an uncharacterized protein from Homo sapiens (Human).